We begin with the raw amino-acid sequence, 555 residues long: Pentatricopeptide repeat-containing protein At2g44880 (555 aa).

PPR repeat units lie at residues 41-75 (DSFL…TCFA), 77-111 (DNFT…GFCA), 112-142 (DMYV…MPHR), 143-173 (SEVS…MPHV), 175-205 (DVVI…MTHK), 206-240 (TVIT…NLVS), 241-267 (WNTM…MQAT), 273-307 (DDVT…KLDK), 308-342 (KVKV…QVAS), 343-370 (WNAM…MIEE), 373-407 (DEIT…GLNA), and 408-438 (KIEH…MPFE). The segment at 443 to 518 (ILSSFLSACG…EVGCSLIEIN (76 aa)) is type E motif. The tract at residues 519–549 (YIVSEFISGDTTHPHRRSIHLVLGDLLMHMN) is type E(+) motif.

It belongs to the PPR family. PCMP-E subfamily.

In Arabidopsis thaliana (Mouse-ear cress), this protein is Pentatricopeptide repeat-containing protein At2g44880 (PCMP-E9).